We begin with the raw amino-acid sequence, 338 residues long: Heat-inducible transcription repressor HrcA (338 aa).

Belongs to the HrcA family.

Its function is as follows. Negative regulator of class I heat shock genes (grpE-dnaK-dnaJ and groELS operons). Prevents heat-shock induction of these operons. This is Heat-inducible transcription repressor HrcA from Polaromonas sp. (strain JS666 / ATCC BAA-500).